The chain runs to 445 residues: Anaerobilin synthase (445 aa).

The Radical SAM core domain maps to 52–287 (TASPRKRLVY…LQGCDFMDDA (236 aa)). Tyr61 serves as a coordination point for S-adenosyl-L-methionine. The [4Fe-4S] cluster site is built by Cys67 and Cys71. Phe73 contributes to the S-adenosyl-L-methionine binding site. Cys74 contacts [4Fe-4S] cluster. Residues Gly118, 119–120 (GT), Glu151, Gln178, Arg190, and Asp215 each bind S-adenosyl-L-methionine.

Belongs to the anaerobic coproporphyrinogen-III oxidase family. ChuW/HutW subfamily. It depends on [4Fe-4S] cluster as a cofactor.

It catalyses the reaction 2 reduced [flavodoxin] + heme b + 2 S-adenosyl-L-methionine = anaerobilin + 2 oxidized [flavodoxin] + Fe(2+) + 5'-deoxyadenosine + L-methionine + S-adenosyl-L-homocysteine. With respect to regulation, inhibited by exposure to molecular oxygen. In terms of biological role, involved in heme degradation and iron utilization under anaerobic conditions. Catalyzes a radical-mediated mechanism facilitating iron liberation and the production of the tetrapyrrole product anaerobilin. Can use heme, mesoheme and deuteroheme as substrates. In Escherichia coli O157:H7, this protein is Anaerobilin synthase.